Here is a 408-residue protein sequence, read N- to C-terminus: Acetate kinase (408 aa).

N10 lines the Mg(2+) pocket. An ATP-binding site is contributed by K17. Position 96 (R96) interacts with substrate. The Proton donor/acceptor role is filled by D153. ATP is bound by residues 213–217 (HLGNG) and 288–290 (DLR). E393 is a Mg(2+) binding site.

This sequence belongs to the acetokinase family. In terms of assembly, homodimer. The cofactor is Mg(2+). Mn(2+) is required as a cofactor.

The protein localises to the cytoplasm. The catalysed reaction is acetate + ATP = acetyl phosphate + ADP. It functions in the pathway metabolic intermediate biosynthesis; acetyl-CoA biosynthesis; acetyl-CoA from acetate: step 1/2. Catalyzes the formation of acetyl phosphate from acetate and ATP. Can also catalyze the reverse reaction. In Borrelia duttonii (strain Ly), this protein is Acetate kinase.